The primary structure comprises 185 residues: Translation initiation factor IF-3, chloroplastic (185 aa).

This sequence belongs to the IF-3 family. As to quaternary structure, monomer.

It is found in the plastid. The protein resides in the chloroplast. In terms of biological role, IF-3 binds to the 30S ribosomal subunit and shifts the equilibrium between 70S ribosomes and their 50S and 30S subunits in favor of the free subunits, thus enhancing the availability of 30S subunits on which protein synthesis initiation begins. This chain is Translation initiation factor IF-3, chloroplastic, found in Cyanidium caldarium (Red alga).